The following is a 292-amino-acid chain: 4-hydroxy-tetrahydrodipicolinate synthase (292 aa).

Thr-50 contributes to the pyruvate binding site. Tyr-139 serves as the catalytic Proton donor/acceptor. Lys-167 acts as the Schiff-base intermediate with substrate in catalysis. Ile-208 is a binding site for pyruvate.

This sequence belongs to the DapA family. In terms of assembly, homotetramer; dimer of dimers.

Its subcellular location is the cytoplasm. The enzyme catalyses L-aspartate 4-semialdehyde + pyruvate = (2S,4S)-4-hydroxy-2,3,4,5-tetrahydrodipicolinate + H2O + H(+). The protein operates within amino-acid biosynthesis; L-lysine biosynthesis via DAP pathway; (S)-tetrahydrodipicolinate from L-aspartate: step 3/4. In terms of biological role, catalyzes the condensation of (S)-aspartate-beta-semialdehyde [(S)-ASA] and pyruvate to 4-hydroxy-tetrahydrodipicolinate (HTPA). This Oenococcus oeni (strain ATCC BAA-331 / PSU-1) protein is 4-hydroxy-tetrahydrodipicolinate synthase.